A 125-amino-acid chain; its full sequence is Small ribosomal subunit protein uS13 (125 aa).

A disordered region spans residues 90-125; it reads TRHRRGLPVRGQRTHTNARTKKGPRRAIAGKKKVTK.

The protein belongs to the universal ribosomal protein uS13 family. Part of the 30S ribosomal subunit. Forms a loose heterodimer with protein S19. Forms two bridges to the 50S subunit in the 70S ribosome.

Located at the top of the head of the 30S subunit, it contacts several helices of the 16S rRNA. In the 70S ribosome it contacts the 23S rRNA (bridge B1a) and protein L5 of the 50S subunit (bridge B1b), connecting the 2 subunits; these bridges are implicated in subunit movement. Contacts the tRNAs in the A and P-sites. The protein is Small ribosomal subunit protein uS13 of Gemmatimonas aurantiaca (strain DSM 14586 / JCM 11422 / NBRC 100505 / T-27).